The following is a 411-amino-acid chain: Glutamate dehydrogenase 2 (411 aa).

Lys102 is an active-site residue.

This sequence belongs to the Glu/Leu/Phe/Val dehydrogenases family.

It is found in the mitochondrion. It carries out the reaction L-glutamate + NAD(+) + H2O = 2-oxoglutarate + NH4(+) + NADH + H(+). The enzyme catalyses L-glutamate + NADP(+) + H2O = 2-oxoglutarate + NH4(+) + NADPH + H(+). This chain is Glutamate dehydrogenase 2 (GDH2), found in Arabidopsis thaliana (Mouse-ear cress).